We begin with the raw amino-acid sequence, 104 residues long: Large ribosomal subunit protein uL24 (104 aa).

Belongs to the universal ribosomal protein uL24 family. In terms of assembly, part of the 50S ribosomal subunit.

One of two assembly initiator proteins, it binds directly to the 5'-end of the 23S rRNA, where it nucleates assembly of the 50S subunit. In terms of biological role, one of the proteins that surrounds the polypeptide exit tunnel on the outside of the subunit. The sequence is that of Large ribosomal subunit protein uL24 from Anaplasma phagocytophilum (strain HZ).